The following is a 220-amino-acid chain: Large ribosomal subunit protein uL3 (220 aa).

Residues 132-153 (SGRASHGNSRSHNVPGSIGMAQ) are disordered. Residues 133-145 (GRASHGNSRSHNV) show a composition bias toward polar residues. At glutamine 153 the chain carries N5-methylglutamine.

It belongs to the universal ribosomal protein uL3 family. Part of the 50S ribosomal subunit. Forms a cluster with proteins L14 and L19. Post-translationally, methylated by PrmB.

Functionally, one of the primary rRNA binding proteins, it binds directly near the 3'-end of the 23S rRNA, where it nucleates assembly of the 50S subunit. The protein is Large ribosomal subunit protein uL3 of Ralstonia nicotianae (strain ATCC BAA-1114 / GMI1000) (Ralstonia solanacearum).